Here is a 250-residue protein sequence, read N- to C-terminus: MIVDDIYKNNDKKILIKRNMRSRGILSMRSSIMNFNLNKKIGIIAEFKRRSPSGFVNNENTDIFKYYDVIHNSIAGMSILTEERYFNGNQMDVVSVQRYNIPILIKDFVSNDEMIESSYMIGGDVILLIADFLERDKIEMLNRKIKSLGMEALIEFHDLKAFERITTDENVIIGYNRRNLKTLKIEDESFDAQDLIRSTGLLSVLESGITSENILKMPRYNAMLIGSSILSNDSVLKSAGMIKYDGFGYS.

The protein belongs to the TrpC family.

It carries out the reaction 1-(2-carboxyphenylamino)-1-deoxy-D-ribulose 5-phosphate + H(+) = (1S,2R)-1-C-(indol-3-yl)glycerol 3-phosphate + CO2 + H2O. It participates in amino-acid biosynthesis; L-tryptophan biosynthesis; L-tryptophan from chorismate: step 4/5. The chain is Indole-3-glycerol phosphate synthase from Picrophilus torridus (strain ATCC 700027 / DSM 9790 / JCM 10055 / NBRC 100828 / KAW 2/3).